A 210-amino-acid polypeptide reads, in one-letter code: Probable membrane protein MT1774 (210 aa).

The next 2 membrane-spanning stretches (helical) occupy residues 43-63 (AVVM…AAAA) and 165-185 (ALAA…LLAL).

It localises to the cell membrane. In Mycobacterium tuberculosis (strain CDC 1551 / Oshkosh), this protein is Probable membrane protein MT1774.